A 316-amino-acid polypeptide reads, in one-letter code: MQRCSVVAALAGVVFLAQACSLSTPSRITHTDKLPVVVTFNALKELTQMVGGEKIHLVSIVPDGVDSHDFEPKAKHMAFISDAKVIVYNGLGMEPWIHSVLHAARNSGSIRVEAAQGIVPLKAHTRGHTAHHVHAHASHGSAYDPHVWLSVCNAQTMLRTIGKALCKADPQHTRFYKRNARNAAARLEALYKEYRSKFAALSHRYFVTTHAAFGYLCRDFDLQQKSIKDVFNTEEPSIKRLVELVEFSKKHSVRTIFSERGPSEKVARVLAQEIGASVETIYTMEKNEENLSYYERMKHNINRIYRACSKQVTPSQ.

The first 19 residues, 1-19 (MQRCSVVAALAGVVFLAQA), serve as a signal peptide directing secretion. His-68, His-146, and His-210 together coordinate a divalent metal cation.

It belongs to the bacterial solute-binding protein 9 family.

The protein resides in the periplasm. Its function is as follows. Part of an ATP-binding cassette (ABC) transport system involved in metal import. Binds a metal with high affinity and specificity and delivers it to the membrane permease for translocation into the cytoplasm. This Treponema pallidum (strain Nichols) protein is Putative metal-binding protein TP_0034.